The primary structure comprises 392 residues: Succinyl-diaminopimelate desuccinylase (392 aa).

Residue histidine 78 coordinates Zn(2+). Residue aspartate 80 is part of the active site. A Zn(2+)-binding site is contributed by aspartate 110. The active-site Proton acceptor is glutamate 145. 3 residues coordinate Zn(2+): glutamate 146, glutamate 174, and histidine 363.

The protein belongs to the peptidase M20A family. DapE subfamily. In terms of assembly, homodimer. The cofactor is Zn(2+). Co(2+) is required as a cofactor.

It catalyses the reaction N-succinyl-(2S,6S)-2,6-diaminopimelate + H2O = (2S,6S)-2,6-diaminopimelate + succinate. Its pathway is amino-acid biosynthesis; L-lysine biosynthesis via DAP pathway; LL-2,6-diaminopimelate from (S)-tetrahydrodipicolinate (succinylase route): step 3/3. Catalyzes the hydrolysis of N-succinyl-L,L-diaminopimelic acid (SDAP), forming succinate and LL-2,6-diaminopimelate (DAP), an intermediate involved in the bacterial biosynthesis of lysine and meso-diaminopimelic acid, an essential component of bacterial cell walls. This is Succinyl-diaminopimelate desuccinylase from Methylobacterium radiotolerans (strain ATCC 27329 / DSM 1819 / JCM 2831 / NBRC 15690 / NCIMB 10815 / 0-1).